Here is a 962-residue protein sequence, read N- to C-terminus: Activity-dependent neuroprotective protein 2a (962 aa).

The segment at 75–98 (LCCSLCWYSSRSVPTFRSHIHRCH) adopts a C2H2-type 1 zinc-finger fold. The C2H2-type 2; degenerate zinc-finger motif lies at 108–130 (LMCPYCPFVSSPKVTEQHIQFFH). The segment at 165 to 188 (YTCATCGYHDSLLYVMKKHVLVNH) adopts a C2H2-type 3; degenerate zinc-finger fold. The C2H2-type 4 zinc finger occupies 219–244 (YHCKLCKLPAETIEHLLYHILSSEKH). A C2H2-type 5; degenerate zinc finger spans residues 527–547 (VKCLRCKILLTEQGIFQHLLH). 2 C2H2-type zinc fingers span residues 549–572 (LKCLFCPQMFYSFKQIMEHSKKEH) and 650–673 (NACPFCQVKLQNPEDYELHLQTKH). A C2H2-type 8; degenerate zinc finger spans residues 688 to 712 (YKCIYCFGVYTEKSTPKTISIHVQR). Residues 753 to 781 (QGAPEFPKPKKEAVTPRNRRRNTKASKTG) are disordered. A DNA-binding region (homeobox) is located at residues 795 to 854 (PMGMERTSFEDRKDFLSQYFHRKPYVTKTEIELLASRLWINKADVKAHFNSKLTKCLKAI).

It is found in the nucleus. May be involved in transcriptional regulation. Required for progression through late erythroid differentiation. May be involved in vasculogenesis. The sequence is that of Activity-dependent neuroprotective protein 2a from Danio rerio (Zebrafish).